The sequence spans 490 residues: Thyroid hormone receptor alpha (490 aa).

The tract at residues 1 to 32 (MEQKPSKVECGSDPEENSARSPDGKRKRKNGQ) is disordered. Residues 1–52 (MEQKPSKVECGSDPEENSARSPDGKRKRKNGQCSLKTSMSGYIPSYLDKDEQ) are modulating. Residues Cys-53, Cys-56, Cys-70, Cys-73, Cys-91, Cys-97, Cys-107, and Cys-110 each contribute to the Zn(2+) site. 2 NR C4-type zinc fingers span residues 53–73 (CVVC…CEGC) and 91–115 (CKYD…FKKC). Positions 53 to 127 (CVVCGDKATG…VGMAMDLVLD (75 aa)) form a DNA-binding region, nuclear receptor. Positions 163–407 (EEWDLIHIAT…EGQQLLGMHV (245 aa)) constitute an NR LBD domain. Positions 228 and 277 each coordinate 3,3',5-triiodo-L-thyronine. Residues 457–490 (AVCGEDDSSEADSPSSSEEEPEVCEDLAGNAASP) are disordered.

The protein belongs to the nuclear hormone receptor family. NR1 subfamily. Binds DNA as a dimer; homodimer and heterodimer with RXRB. Interacts with NCOA3 and NCOA6 coactivators, leading to a strong increase of transcription of target genes. Probably interacts with SFPQ. Interacts with C1D. Interacts with AKAP13. Interacts with TP53INP2. Interacts with PER2. Isoform alpha-2 and isoform alpha-1 interact with TACC1, but the interaction with alpha-1 is weaker. The interaction with isoform alpha-1, but not alpha-2, is decreased in the presence of thyroid hormone T3.

It is found in the nucleus. The protein resides in the cytoplasm. Nuclear hormone receptor that can act as a repressor or activator of transcription. High affinity receptor for thyroid hormones, including triiodothyronine and thyroxine. Its function is as follows. Does not bind thyroid hormone and functions as a weak dominant negative inhibitor of thyroid hormone action. The polypeptide is Thyroid hormone receptor alpha (THRA) (Homo sapiens (Human)).